The primary structure comprises 231 residues: Probable septum site-determining protein MinC (231 aa).

Residues 102–125 are disordered; it reads KEKAPRPAPAPQAPAQNTTPVTKT.

This sequence belongs to the MinC family. As to quaternary structure, interacts with MinD and FtsZ.

Functionally, cell division inhibitor that blocks the formation of polar Z ring septums. Rapidly oscillates between the poles of the cell to destabilize FtsZ filaments that have formed before they mature into polar Z rings. Prevents FtsZ polymerization. This is Probable septum site-determining protein MinC from Escherichia coli O6:K15:H31 (strain 536 / UPEC).